A 555-amino-acid chain; its full sequence is Urocanate hydratase (555 aa).

NAD(+) is bound by residues glycine 52–glycine 53, glutamine 130, glycine 176–glycine 178, glutamate 196, arginine 201, asparagine 242–alanine 243, glutamine 263–histidine 267, tyrosine 273–leucine 274, and tyrosine 322. The active site involves cysteine 410. Glycine 492 is a binding site for NAD(+).

This sequence belongs to the urocanase family. Requires NAD(+) as cofactor.

The protein resides in the cytoplasm. It carries out the reaction 4-imidazolone-5-propanoate = trans-urocanate + H2O. The protein operates within amino-acid degradation; L-histidine degradation into L-glutamate; N-formimidoyl-L-glutamate from L-histidine: step 2/3. Its function is as follows. Catalyzes the conversion of urocanate to 4-imidazolone-5-propionate. The sequence is that of Urocanate hydratase from Shewanella putrefaciens (strain CN-32 / ATCC BAA-453).